A 166-amino-acid chain; its full sequence is Phospholipase A2 inhibitor clone 11 (166 aa).

Residues 1-19 (MRLILLSGLLLLGIFLANG) form the signal peptide. The region spanning 46–161 (LKGSFLIVHK…CDDNLLVVCE (116 aa)) is the C-type lectin domain. 2 disulfides stabilise this stretch: Cys-83–Cys-160 and Cys-138–Cys-152. N-linked (GlcNAc...) asparagine glycosylation is present at Asn-122.

It belongs to the alpha-type phospholipase A2 inhibitor family. As to quaternary structure, homotrimer; non-covalently linked. In terms of tissue distribution, expressed by the liver.

It localises to the secreted. Its function is as follows. This phospholipase A2 inhibitor binds directly phospholipase A2 in the presence or absence of calcium. This chain is Phospholipase A2 inhibitor clone 11, found in Bothrops neuwiedi (Neuwied's lancehead).